Reading from the N-terminus, the 31-residue chain is Photosystem II reaction center protein T (31 aa).

Residues 3 to 23 (AFTYTLLMTLGVVTLFFAVAF) form a helical membrane-spanning segment.

This sequence belongs to the PsbT family. As to quaternary structure, PSII is composed of 1 copy each of membrane proteins PsbA, PsbB, PsbC, PsbD, PsbE, PsbF, PsbH, PsbI, PsbJ, PsbK, PsbL, PsbM, PsbT, PsbX, PsbY, Psb30/Ycf12, peripheral proteins PsbO, CyanoQ (PsbQ), PsbU, PsbV and a large number of cofactors. It forms dimeric complexes.

The protein resides in the cellular thylakoid membrane. In terms of biological role, found at the monomer-monomer interface of the photosystem II (PS II) dimer, plays a role in assembly and dimerization of PSII. PSII is a light-driven water plastoquinone oxidoreductase, using light energy to abstract electrons from H(2)O, generating a proton gradient subsequently used for ATP formation. This is Photosystem II reaction center protein T from Prochlorococcus marinus (strain SARG / CCMP1375 / SS120).